A 295-amino-acid polypeptide reads, in one-letter code: Tyrosine recombinase XerD (295 aa).

Positions 1–85 constitute a Core-binding (CB) domain; that stretch reads MDTIIEEYLK…TIRSFHQFAL (85 aa). The Tyr recombinase domain occupies 106–289; that stretch reads KLPDVLEINE…SKSQIRKMYN (184 aa). Active-site residues include arginine 146, lysine 170, histidine 241, arginine 244, and histidine 267. The active-site O-(3'-phospho-DNA)-tyrosine intermediate is the tyrosine 276.

Belongs to the 'phage' integrase family. XerD subfamily. Forms a cyclic heterotetrameric complex composed of two molecules of XerC and two molecules of XerD.

The protein resides in the cytoplasm. Functionally, site-specific tyrosine recombinase, which acts by catalyzing the cutting and rejoining of the recombining DNA molecules. The XerC-XerD complex is essential to convert dimers of the bacterial chromosome into monomers to permit their segregation at cell division. It also contributes to the segregational stability of plasmids. This Staphylococcus saprophyticus subsp. saprophyticus (strain ATCC 15305 / DSM 20229 / NCIMB 8711 / NCTC 7292 / S-41) protein is Tyrosine recombinase XerD.